Reading from the N-terminus, the 901-residue chain is HTH-type transcriptional regulator MalT (901 aa).

An ATP-binding site is contributed by 39–46 (SPAGYGKT). The HTH luxR-type domain maps to 829 to 894 (ELIRTSPLTQ…DAVQHAQQLL (66 aa)). A DNA-binding region (H-T-H motif) is located at residues 853 to 872 (NEQIAGELAVAATTIKTHIR).

This sequence belongs to the MalT family. As to quaternary structure, monomer in solution. Oligomerizes to an active state in the presence of the positive effectors ATP and maltotriose.

Activated by ATP and maltotriose, which are both required for DNA binding. Its function is as follows. Positively regulates the transcription of the maltose regulon whose gene products are responsible for uptake and catabolism of malto-oligosaccharides. Specifically binds to the promoter region of its target genes, recognizing a short DNA motif called the MalT box. This Salmonella typhi protein is HTH-type transcriptional regulator MalT.